Reading from the N-terminus, the 1355-residue chain is Ecdysone-induced protein 75B, isoform A (1355 aa).

4 disordered regions span residues 60 to 91 (QHQP…QQHS), 126 to 228 (RLKN…DSSY), 248 to 268 (ELEQ…EAKP), and 308 to 344 (ATQQ…NSSA). Residues 66 to 76 (QLHHQHQHQHQ) show a composition bias toward basic residues. Composition is skewed to low complexity over residues 77–91 (HQQQ…QQHS) and 143–179 (TLVK…QHQQ). Over residues 200-213 (SGIDEDSPNSDEDC) the composition is skewed to acidic residues. Composition is skewed to polar residues over residues 218–228 (PAGTSLEDSSY) and 254–264 (TTGGSNAQQQV). 2 stretches are compositionally biased toward low complexity: residues 308–321 (ATQQ…QHQH) and 330–344 (DSNC…NSSA). The nuclear receptor DNA-binding region spans 384–474 (SQLNYLCQKF…VGMSRDAVRF (91 aa)). The NR C4-type; degenerate zinc-finger motif lies at 387–421 (NYLCQKFDEKLDTALSNSSANTGRNTPAVTANEDA). The NR C4-type zinc-finger motif lies at 438-457 (CTKNQQCSILRINRNRCQYC). An NR LBD domain is found at 508 to 756 (DQPRLLAAVL…QQMWSMEDGN (249 aa)). Disordered regions lie at residues 780–821 (KSPL…SALA), 927–964 (LDSP…SVDD), 987–1007 (VSVS…KRQI), 1051–1117 (AEAD…SSHS), 1147–1260 (ENST…SNSA), and 1312–1344 (TVTA…NPGL). Composition is skewed to low complexity over residues 797–809 (GSPS…GVSL), 948–960 (SSGG…SPRS), 987–1001 (VSVS…STSS), 1053–1098 (ADAS…AQSQ), and 1106–1117 (SSPKASMASSHS). Polar residues-rich tracts occupy residues 1149–1162 (STAA…VGNR) and 1174–1196 (AVQN…QRQQ). Composition is skewed to low complexity over residues 1197–1233 (SVSP…SASS), 1242–1260 (STSN…SNSA), and 1315–1343 (ASNG…PNPG).

It belongs to the nuclear hormone receptor family. NR1 subfamily.

It localises to the nucleus. Functionally, implicated in the regulation of ecdysone-triggered gene hierarchies. Probably plays a key role in mediating the regulation of the larval molt by 20-OH-ecdysone. The protein is Ecdysone-induced protein 75B, isoform A (Eip75B) of Drosophila melanogaster (Fruit fly).